A 120-amino-acid polypeptide reads, in one-letter code: Immunoglobulin kappa variable 2-112 (120 aa).

Residues 1–20 (MRCSLQFLGVLMFWISGVSG) form the signal peptide. Residues 21 to 43 (DIVITQDELSNPVTSGESVSISC) form a framework-1 region. Cysteine 43 and cysteine 113 form a disulfide bridge. The interval 44 to 59 (RSSKSLLYKDGKTYLN) is complementarity-determining-1. A framework-2 region spans residues 60–74 (WFLQRPGQSPQLLIY). A complementarity-determining-2 region spans residues 75 to 81 (LMSTRAS). The framework-3 stretch occupies residues 82–113 (GVSDRFSGSGSGTDFTLEISRVKAEDVGVYYC). A complementarity-determining-3 region spans residues 114–120 (QQLVEYP).

The chain is Immunoglobulin kappa variable 2-112 from Mus musculus (Mouse).